A 568-amino-acid polypeptide reads, in one-letter code: Small ribosomal subunit protein bS1 (568 aa).

S1 motif domains are found at residues 27-93, 111-177, 198-266, 283-353, 370-440, and 459-530; these read GYVA…LSRE, GERV…VSRR, GQVV…LGMK, GKKI…LGLK, GTEV…LGIK, and NAVV…LSIK.

This sequence belongs to the bacterial ribosomal protein bS1 family.

Functionally, binds mRNA; thus facilitating recognition of the initiation point. It is needed to translate mRNA with a short Shine-Dalgarno (SD) purine-rich sequence. This is Small ribosomal subunit protein bS1 (rpsA) from Rhizobium meliloti (strain 1021) (Ensifer meliloti).